We begin with the raw amino-acid sequence, 891 residues long: Protein kinase kin1 (891 aa).

The tract at residues 65–116 is disordered; that stretch reads GYISPSSQSPHHGPVRSPSSRKPLPASPSRTRDHSLRVPVSGHSYSADEKPR. The 271-residue stretch at 125–395 folds into the Protein kinase domain; that stretch reads YVLGKTIGAG…LEEVLNHPWM (271 aa). Residues 131–139 and Lys-154 each bind ATP; that span reads IGAGSMGKV. Asp-266 serves as the catalytic Proton acceptor. At Thr-528 the chain carries Phosphothreonine. Disordered regions lie at residues 528 to 699, 728 to 747, and 805 to 841; these read TPVS…RNNR, TMGN…TDKL, and TPTK…LDDN. Composition is skewed to low complexity over residues 529–538 and 583–603; these read PVSSVPSSPV and HSPS…IFRR. Residues Ser-535 and Ser-536 each carry the phosphoserine modification. Polar residues-rich tracts occupy residues 612 to 629, 649 to 659, 669 to 699, 728 to 742, and 820 to 829; these read KSST…TSQS, LVTQSAIGRST, ISSQ…RNNR, TMGN…SPSK, and YGSNSTTDSY. Positions 842-891 constitute a KA1 domain; that stretch reads GESPASNLAFEIYIVKVPILSLRGVSFHRISGNSWQYKTLASRILNELKL.

The protein belongs to the protein kinase superfamily. Ser/Thr protein kinase family.

Its subcellular location is the cytoplasm. The catalysed reaction is L-seryl-[protein] + ATP = O-phospho-L-seryl-[protein] + ADP + H(+). It catalyses the reaction L-threonyl-[protein] + ATP = O-phospho-L-threonyl-[protein] + ADP + H(+). Its function is as follows. Has a role in establishing the characteristic rod cell shape. Important for cell polarity and is involved in directing growth to the cell ends. This Schizosaccharomyces pombe (strain 972 / ATCC 24843) (Fission yeast) protein is Protein kinase kin1 (kin1).